We begin with the raw amino-acid sequence, 206 residues long: LexA repressor (206 aa).

Positions 28–48 (VREIGQAVGLASSSTVHGHLS) form a DNA-binding region, H-T-H motif. Active-site for autocatalytic cleavage activity residues include S128 and K166.

This sequence belongs to the peptidase S24 family. Homodimer.

It carries out the reaction Hydrolysis of Ala-|-Gly bond in repressor LexA.. Functionally, represses a number of genes involved in the response to DNA damage (SOS response), including recA and lexA. In the presence of single-stranded DNA, RecA interacts with LexA causing an autocatalytic cleavage which disrupts the DNA-binding part of LexA, leading to derepression of the SOS regulon and eventually DNA repair. The sequence is that of LexA repressor from Bacillus cytotoxicus (strain DSM 22905 / CIP 110041 / 391-98 / NVH 391-98).